A 765-amino-acid chain; its full sequence is DNA topoisomerase 1 (765 aa).

Residues Met-1–Lys-23 are compositionally biased toward basic and acidic residues. A disordered region spans residues Met-1–Glu-199. Ser-2 bears the N-acetylserine mark. Ser-2 and Ser-10 each carry phosphoserine. A compositionally biased stretch (basic residues) spans His-24–Lys-39. A compositionally biased stretch (basic and acidic residues) spans Lys-40–Asn-108. A Phosphoserine modification is found at Ser-57. Lys-101 is covalently cross-linked (Glycyl lysine isopeptide (Lys-Gly) (interchain with G-Cter in SUMO2)). Lys-103 participates in a covalent cross-link: Glycyl lysine isopeptide (Lys-Gly) (interchain with G-Cter in SUMO); alternate. Lys-103 participates in a covalent cross-link: Glycyl lysine isopeptide (Lys-Gly) (interchain with G-Cter in SUMO2); alternate. Residue Ser-112 is modified to Phosphoserine. Lys-117 participates in a covalent cross-link: Glycyl lysine isopeptide (Lys-Gly) (interchain with G-Cter in SUMO); alternate. A Glycyl lysine isopeptide (Lys-Gly) (interchain with G-Cter in SUMO2); alternate cross-link involves residue Lys-117. A Glycyl lysine isopeptide (Lys-Gly) (interchain with G-Cter in SUMO1); alternate cross-link involves residue Lys-117. Residues Pro-129–Glu-166 show a composition bias toward basic and acidic residues. Glycyl lysine isopeptide (Lys-Gly) (interchain with G-Cter in SUMO2) cross-links involve residues Lys-134 and Lys-148. Lys-153 participates in a covalent cross-link: Glycyl lysine isopeptide (Lys-Gly) (interchain with G-Cter in SUMO); alternate. Lys-153 participates in a covalent cross-link: Glycyl lysine isopeptide (Lys-Gly) (interchain with G-Cter in SUMO2); alternate. Glycyl lysine isopeptide (Lys-Gly) (interchain with G-Cter in SUMO2) cross-links involve residues Lys-158 and Lys-164. Residue Lys-172 forms a Glycyl lysine isopeptide (Lys-Gly) (interchain with G-Cter in SUMO2); alternate linkage. Lys-172 is subject to N6-acetyllysine; alternate. Residues Lys-179–Glu-199 are compositionally biased toward basic and acidic residues. Lys-204 participates in a covalent cross-link: Glycyl lysine isopeptide (Lys-Gly) (interchain with G-Cter in SUMO2). Lys-280 carries the N6-acetyllysine modification. Lys-336 is covalently cross-linked (Glycyl lysine isopeptide (Lys-Gly) (interchain with G-Cter in SUMO2)). 2 interaction with DNA regions span residues Lys-425–Tyr-426 and Arg-488–Lys-493. The Topo IB-type catalytic domain maps to Ser-432 to Phe-765. Ser-506 is modified (phosphoserine; by CK2). Lys-549 participates in a covalent cross-link: Glycyl lysine isopeptide (Lys-Gly) (interchain with G-Cter in SUMO2). The tract at residues Thr-585–Lys-587 is interaction with DNA. Glycyl lysine isopeptide (Lys-Gly) (interchain with G-Cter in SUMO2) cross-links involve residues Lys-642, Lys-700, and Lys-712. Tyr-723 acts as the O-(3'-phospho-DNA)-tyrosine intermediate in catalysis.

This sequence belongs to the type IB topoisomerase family. As to quaternary structure, monomer. Interacts with ERCC6. Interacts with TPRN; TPRN interacts with a number of DNA damage response proteins, is recruited to sites of DNA damage and may play a role in DNA damage repair. In terms of assembly, (Microbial infection) Interacts with SV40 Large T antigen; this interactions allows viral DNA replication. Post-translationally, sumoylated. Lys-117 is the main site of sumoylation. Sumoylation plays a role in partitioning TOP1 between nucleoli and nucleoplasm. Levels are dramatically increased on camptothecin (CPT) treatment. In terms of processing, phosphorylation at Ser-506 by CK2 increases binding to supercoiled DNA and sensitivity to camptothecin. Endothelial cells.

Its subcellular location is the nucleus. The protein localises to the nucleolus. It localises to the nucleoplasm. The enzyme catalyses ATP-independent breakage of single-stranded DNA, followed by passage and rejoining.. Specifically inhibited by camptothecin (CPT), a plant alkaloid with antitumor activity. Its function is as follows. Releases the supercoiling and torsional tension of DNA introduced during the DNA replication and transcription by transiently cleaving and rejoining one strand of the DNA duplex. Introduces a single-strand break via transesterification at a target site in duplex DNA. The scissile phosphodiester is attacked by the catalytic tyrosine of the enzyme, resulting in the formation of a DNA-(3'-phosphotyrosyl)-enzyme intermediate and the expulsion of a 5'-OH DNA strand. The free DNA strand then rotates around the intact phosphodiester bond on the opposing strand, thus removing DNA supercoils. Finally, in the religation step, the DNA 5'-OH attacks the covalent intermediate to expel the active-site tyrosine and restore the DNA phosphodiester backbone. Regulates the alternative splicing of tissue factor (F3) pre-mRNA in endothelial cells. Involved in the circadian transcription of the core circadian clock component BMAL1 by altering the chromatin structure around the ROR response elements (ROREs) on the BMAL1 promoter. The sequence is that of DNA topoisomerase 1 (TOP1) from Homo sapiens (Human).